Here is a 436-residue protein sequence, read N- to C-terminus: 3-ketoacyl-CoA thiolase (436 aa).

The Acyl-thioester intermediate role is filled by cysteine 99. Residues histidine 392 and cysteine 422 each act as proton acceptor in the active site.

It belongs to the thiolase-like superfamily. Thiolase family. In terms of assembly, heterotetramer of two alpha chains (FadJ) and two beta chains (FadI).

The protein localises to the cytoplasm. It catalyses the reaction an acyl-CoA + acetyl-CoA = a 3-oxoacyl-CoA + CoA. It participates in lipid metabolism; fatty acid beta-oxidation. Catalyzes the final step of fatty acid oxidation in which acetyl-CoA is released and the CoA ester of a fatty acid two carbons shorter is formed. The protein is 3-ketoacyl-CoA thiolase of Shewanella piezotolerans (strain WP3 / JCM 13877).